Reading from the N-terminus, the 443-residue chain is ATP-dependent protease ATPase subunit HslU (443 aa).

ATP contacts are provided by residues Ile18 and 60-65 (GVGKTE). A disordered region spans residues 137 to 156 (PPPRDAWGQNEQSEDTSNTR). The segment covering 145–156 (QNEQSEDTSNTR) has biased composition (polar residues). ATP is bound by residues Asp256, Glu321, and Arg393.

This sequence belongs to the ClpX chaperone family. HslU subfamily. A double ring-shaped homohexamer of HslV is capped on each side by a ring-shaped HslU homohexamer. The assembly of the HslU/HslV complex is dependent on binding of ATP.

It is found in the cytoplasm. Its function is as follows. ATPase subunit of a proteasome-like degradation complex; this subunit has chaperone activity. The binding of ATP and its subsequent hydrolysis by HslU are essential for unfolding of protein substrates subsequently hydrolyzed by HslV. HslU recognizes the N-terminal part of its protein substrates and unfolds these before they are guided to HslV for hydrolysis. The polypeptide is ATP-dependent protease ATPase subunit HslU (Vibrio vulnificus (strain YJ016)).